The following is a 247-amino-acid chain: Ubiquinone biosynthesis O-methyltransferase (247 aa).

Arginine 39, glycine 70, aspartate 91, and methionine 134 together coordinate S-adenosyl-L-methionine.

This sequence belongs to the methyltransferase superfamily. UbiG/COQ3 family.

It carries out the reaction a 3-demethylubiquinol + S-adenosyl-L-methionine = a ubiquinol + S-adenosyl-L-homocysteine + H(+). The catalysed reaction is a 3-(all-trans-polyprenyl)benzene-1,2-diol + S-adenosyl-L-methionine = a 2-methoxy-6-(all-trans-polyprenyl)phenol + S-adenosyl-L-homocysteine + H(+). It participates in cofactor biosynthesis; ubiquinone biosynthesis. Its function is as follows. O-methyltransferase that catalyzes the 2 O-methylation steps in the ubiquinone biosynthetic pathway. The sequence is that of Ubiquinone biosynthesis O-methyltransferase from Cereibacter sphaeroides (strain ATCC 17025 / ATH 2.4.3) (Rhodobacter sphaeroides).